The sequence spans 109 residues: Tyrosine-protein phosphatase 6 (109 aa).

The Tyrosine-protein phosphatase domain occupies tyrosine 1–valine 109. Residue aspartate 76 participates in substrate binding.

Belongs to the protein-tyrosine phosphatase family.

The enzyme catalyses O-phospho-L-tyrosyl-[protein] + H2O = L-tyrosyl-[protein] + phosphate. The chain is Tyrosine-protein phosphatase 6 (STY-6) from Styela plicata (Wrinkled sea squirt).